Here is a 68-residue protein sequence, read N- to C-terminus: Acylphosphatase (68 aa).

The Acylphosphatase-like domain maps to 3 to 68; sequence RIACTVHGRV…RCTAGLPSAP (66 aa). Active-site residues include R18 and N36.

The protein belongs to the acylphosphatase family.

It carries out the reaction an acyl phosphate + H2O = a carboxylate + phosphate + H(+). The chain is Acylphosphatase (acyP) from Oleidesulfovibrio alaskensis (strain ATCC BAA-1058 / DSM 17464 / G20) (Desulfovibrio alaskensis).